We begin with the raw amino-acid sequence, 346 residues long: uncharacterized protein (346 aa).

The protein belongs to the Gfo/Idh/MocA family.

This is an uncharacterized protein from Escherichia coli (strain K12).